A 307-amino-acid polypeptide reads, in one-letter code: tRNA dimethylallyltransferase 2 (307 aa).

9–16 contributes to the ATP binding site; it reads GPTAVGKT. 11 to 16 contributes to the substrate binding site; that stretch reads TAVGKT. The interaction with substrate tRNA stretch occupies residues 34–37; it reads DSRQ.

The protein belongs to the IPP transferase family. Monomer. It depends on Mg(2+) as a cofactor.

It carries out the reaction adenosine(37) in tRNA + dimethylallyl diphosphate = N(6)-dimethylallyladenosine(37) in tRNA + diphosphate. Functionally, catalyzes the transfer of a dimethylallyl group onto the adenine at position 37 in tRNAs that read codons beginning with uridine, leading to the formation of N6-(dimethylallyl)adenosine (i(6)A). The sequence is that of tRNA dimethylallyltransferase 2 from Azobacteroides pseudotrichonymphae genomovar. CFP2.